A 157-amino-acid chain; its full sequence is SsrA-binding protein (157 aa).

The protein belongs to the SmpB family.

Its subcellular location is the cytoplasm. Functionally, required for rescue of stalled ribosomes mediated by trans-translation. Binds to transfer-messenger RNA (tmRNA), required for stable association of tmRNA with ribosomes. tmRNA and SmpB together mimic tRNA shape, replacing the anticodon stem-loop with SmpB. tmRNA is encoded by the ssrA gene; the 2 termini fold to resemble tRNA(Ala) and it encodes a 'tag peptide', a short internal open reading frame. During trans-translation Ala-aminoacylated tmRNA acts like a tRNA, entering the A-site of stalled ribosomes, displacing the stalled mRNA. The ribosome then switches to translate the ORF on the tmRNA; the nascent peptide is terminated with the 'tag peptide' encoded by the tmRNA and targeted for degradation. The ribosome is freed to recommence translation, which seems to be the essential function of trans-translation. This chain is SsrA-binding protein, found in Elusimicrobium minutum (strain Pei191).